A 57-amino-acid chain; its full sequence is Ribosome modulation factor 1 (57 aa).

Residues 1 to 14 (MKRQKRDRQSRAHT) are compositionally biased toward basic residues. The segment at 1 to 24 (MKRQKRDRQSRAHTRGYQAGISGR) is disordered.

This sequence belongs to the ribosome modulation factor family.

It is found in the cytoplasm. Functionally, during stationary phase, converts 70S ribosomes to an inactive dimeric form (100S ribosomes). The protein is Ribosome modulation factor 1 of Colwellia psychrerythraea (strain 34H / ATCC BAA-681) (Vibrio psychroerythus).